Consider the following 254-residue polypeptide: Hemin import ATP-binding protein HmuV (254 aa).

Residues 2–239 enclose the ABC transporter domain; it reads LNINQVNINL…DTLSQVWHYD (238 aa). An ATP-binding site is contributed by 34 to 41; that stretch reads GPNGAGKS.

Belongs to the ABC transporter superfamily. Heme (hemin) importer (TC 3.A.1.14.5) family. In terms of assembly, the complex is composed of two ATP-binding proteins (HmuV), two transmembrane proteins (HmuU) and a solute-binding protein (HmuT).

The protein localises to the cell inner membrane. Functionally, part of the ABC transporter complex HmuTUV involved in hemin import. Responsible for energy coupling to the transport system. This Shewanella denitrificans (strain OS217 / ATCC BAA-1090 / DSM 15013) protein is Hemin import ATP-binding protein HmuV.